The chain runs to 179 residues: ATP synthase subunit delta (179 aa).

This sequence belongs to the ATPase delta chain family. In terms of assembly, F-type ATPases have 2 components, F(1) - the catalytic core - and F(0) - the membrane proton channel. F(1) has five subunits: alpha(3), beta(3), gamma(1), delta(1), epsilon(1). F(0) has three main subunits: a(1), b(2) and c(10-14). The alpha and beta chains form an alternating ring which encloses part of the gamma chain. F(1) is attached to F(0) by a central stalk formed by the gamma and epsilon chains, while a peripheral stalk is formed by the delta and b chains.

Its subcellular location is the cell membrane. F(1)F(0) ATP synthase produces ATP from ADP in the presence of a proton or sodium gradient. F-type ATPases consist of two structural domains, F(1) containing the extramembraneous catalytic core and F(0) containing the membrane proton channel, linked together by a central stalk and a peripheral stalk. During catalysis, ATP synthesis in the catalytic domain of F(1) is coupled via a rotary mechanism of the central stalk subunits to proton translocation. Its function is as follows. This protein is part of the stalk that links CF(0) to CF(1). It either transmits conformational changes from CF(0) to CF(1) or is implicated in proton conduction. In Clostridium acetobutylicum (strain ATCC 824 / DSM 792 / JCM 1419 / IAM 19013 / LMG 5710 / NBRC 13948 / NRRL B-527 / VKM B-1787 / 2291 / W), this protein is ATP synthase subunit delta.